The sequence spans 388 residues: Phosphopentomutase (388 aa).

Mn(2+) is bound by residues D11, D283, H288, D324, H325, and H336.

It belongs to the phosphopentomutase family. The cofactor is Mn(2+).

It localises to the cytoplasm. It catalyses the reaction 2-deoxy-alpha-D-ribose 1-phosphate = 2-deoxy-D-ribose 5-phosphate. The enzyme catalyses alpha-D-ribose 1-phosphate = D-ribose 5-phosphate. It functions in the pathway carbohydrate degradation; 2-deoxy-D-ribose 1-phosphate degradation; D-glyceraldehyde 3-phosphate and acetaldehyde from 2-deoxy-alpha-D-ribose 1-phosphate: step 1/2. Isomerase that catalyzes the conversion of deoxy-ribose 1-phosphate (dRib-1-P) and ribose 1-phosphate (Rib-1-P) to deoxy-ribose 5-phosphate (dRib-5-P) and ribose 5-phosphate (Rib-5-P), respectively. The protein is Phosphopentomutase of Anaeromyxobacter dehalogenans (strain 2CP-1 / ATCC BAA-258).